The primary structure comprises 478 residues: Catalase easC (478 aa).

The active site involves H54. A heme-binding site is contributed by Y343. Positions 459 to 478 are disordered; that stretch reads VAEKARPDSPSRAQPGQLRL.

Belongs to the catalase family. Heme is required as a cofactor.

It functions in the pathway alkaloid biosynthesis; ergot alkaloid biosynthesis. In terms of biological role, catalase; part of the gene cluster that mediates the biosynthesis of fungal ergot alkaloid. DmaW catalyzes the first step of ergot alkaloid biosynthesis by condensing dimethylallyl diphosphate (DMAP) and tryptophan to form 4-dimethylallyl-L-tryptophan. The second step is catalyzed by the methyltransferase easF that methylates 4-dimethylallyl-L-tryptophan in the presence of S-adenosyl-L-methionine, resulting in the formation of 4-dimethylallyl-L-abrine. The catalase easC and the FAD-dependent oxidoreductase easE then transform 4-dimethylallyl-L-abrine to chanoclavine-I which is further oxidized by easD in the presence of NAD(+), resulting in the formation of chanoclavine-I aldehyde. Chanoclavine-I aldehyde is the precursor of ergoamides and ergopeptines in Clavicipitaceae, and clavine-type alcaloids such as fumiclavine in Trichocomaceae. However, the metabolites downstream of chanoclavine-I aldehyde in Arthrodermataceae have not been identified yet. The polypeptide is Catalase easC (Trichophyton verrucosum (strain HKI 0517)).